The sequence spans 217 residues: Adenylate kinase (217 aa).

10-15 serves as a coordination point for ATP; sequence GAGKGT. The interval 30 to 59 is NMP; sequence STGDMFRAAMKNETELGLKAKSFIDAGDLV. Residues Thr31, Arg36, 57–59, 85–88, and Gln92 contribute to the AMP site; these read DLV and GFPR. The interval 126-163 is LID; the sequence is GRRVSPTTGKTYHIVYNPPKVEGKCDIDGSDLIQRDDD. Residues Arg127 and 136–137 contribute to the ATP site; that span reads TY. Arg160 and Arg171 together coordinate AMP. Gln199 is an ATP binding site.

The protein belongs to the adenylate kinase family. In terms of assembly, monomer.

It localises to the cytoplasm. The enzyme catalyses AMP + ATP = 2 ADP. Its pathway is purine metabolism; AMP biosynthesis via salvage pathway; AMP from ADP: step 1/1. Its function is as follows. Catalyzes the reversible transfer of the terminal phosphate group between ATP and AMP. Plays an important role in cellular energy homeostasis and in adenine nucleotide metabolism. This chain is Adenylate kinase, found in Shouchella clausii (strain KSM-K16) (Alkalihalobacillus clausii).